A 390-amino-acid polypeptide reads, in one-letter code: Ammonium/H(+) antiporter subunit AmhT (390 aa).

Transmembrane regions (helical) follow at residues 2 to 22 (VIPELFSAGLILLLLFITGFV), 31 to 51 (VVIFILLGIAVGGLLSGSHLL), 52 to 72 (HFAGEVGIVLLFFMLGMEFPL), 94 to 114 (FGVTMAICMMMGLDVITSLII), 143 to 163 (FMLGLLIFEDLVAPILVAVLV), 178 to 198 (LLVVKVVALVAGAVILGVFLF), 212 to 232 (DLFILFVIGLALMYGGLALYL), 266 to 286 (LLLPLFFLYFGTTISFSEGIP), 288 to 308 (IPLLILVLVWSVIAKVIVGVL), and 351 to 371 (VFILASAMIGILLFQFAPSIA).

This sequence belongs to the monovalent cation:proton antiporter 2 (CPA2) transporter (TC 2.A.37) family. As to quaternary structure, interacts with AmhM.

Its subcellular location is the cell membrane. Its activity is regulated as follows. AmhT alone exhibits antiport activity, but interaction with AmhM confers different properties, such as higher KM for potassium. Functionally, ammonium/proton antiporter that mediates the efflux of ammonium ions. Can also transport potassium or rubidium, but not sodium or lithium. The chain is Ammonium/H(+) antiporter subunit AmhT (amhT) from Alkalihalophilus pseudofirmus (strain ATCC BAA-2126 / JCM 17055 / OF4) (Bacillus pseudofirmus).